The primary structure comprises 156 residues: SsrA-binding protein (156 aa).

This sequence belongs to the SmpB family.

The protein resides in the cytoplasm. Functionally, required for rescue of stalled ribosomes mediated by trans-translation. Binds to transfer-messenger RNA (tmRNA), required for stable association of tmRNA with ribosomes. tmRNA and SmpB together mimic tRNA shape, replacing the anticodon stem-loop with SmpB. tmRNA is encoded by the ssrA gene; the 2 termini fold to resemble tRNA(Ala) and it encodes a 'tag peptide', a short internal open reading frame. During trans-translation Ala-aminoacylated tmRNA acts like a tRNA, entering the A-site of stalled ribosomes, displacing the stalled mRNA. The ribosome then switches to translate the ORF on the tmRNA; the nascent peptide is terminated with the 'tag peptide' encoded by the tmRNA and targeted for degradation. The ribosome is freed to recommence translation, which seems to be the essential function of trans-translation. The chain is SsrA-binding protein from Desulfitobacterium hafniense (strain DSM 10664 / DCB-2).